The following is a 54-amino-acid chain: UPF0391 membrane protein Oant_1245 (54 aa).

Transmembrane regions (helical) follow at residues alanine 5–glycine 25 and glycine 29–alanine 48.

This sequence belongs to the UPF0391 family.

It is found in the cell membrane. In Brucella anthropi (strain ATCC 49188 / DSM 6882 / CCUG 24695 / JCM 21032 / LMG 3331 / NBRC 15819 / NCTC 12168 / Alc 37) (Ochrobactrum anthropi), this protein is UPF0391 membrane protein Oant_1245.